The primary structure comprises 364 residues: 3-isopropylmalate dehydrogenase (364 aa).

Residue 76–89 coordinates NAD(+); sequence GPKWDGNAPEKRPE. Residues Arg-96, Arg-106, Arg-134, and Asp-223 each coordinate substrate. Residues Asp-223, Asp-247, and Asp-251 each coordinate Mg(2+). Residue 281–293 coordinates NAD(+); that stretch reads GSAPDIAGTGAAN.

The protein belongs to the isocitrate and isopropylmalate dehydrogenases family. LeuB type 1 subfamily. Homodimer. Mg(2+) is required as a cofactor. Mn(2+) serves as cofactor.

The protein localises to the cytoplasm. It catalyses the reaction (2R,3S)-3-isopropylmalate + NAD(+) = 4-methyl-2-oxopentanoate + CO2 + NADH. It functions in the pathway amino-acid biosynthesis; L-leucine biosynthesis; L-leucine from 3-methyl-2-oxobutanoate: step 3/4. Catalyzes the oxidation of 3-carboxy-2-hydroxy-4-methylpentanoate (3-isopropylmalate) to 3-carboxy-4-methyl-2-oxopentanoate. The product decarboxylates to 4-methyl-2 oxopentanoate. The polypeptide is 3-isopropylmalate dehydrogenase (Shouchella clausii (strain KSM-K16) (Alkalihalobacillus clausii)).